Reading from the N-terminus, the 301-residue chain is Ornithine carbamoyltransferase (301 aa).

Residues 53–56, Gln-80, Arg-104, and 131–134 each bind carbamoyl phosphate; these read STRT and HPCQ. Residues Asn-162, Asp-221, and 225-226 each bind L-ornithine; that span reads SI. Residues 260–261 and Arg-288 each bind carbamoyl phosphate; that span reads CL.

It belongs to the aspartate/ornithine carbamoyltransferase superfamily. OTCase family.

The protein localises to the cytoplasm. It catalyses the reaction carbamoyl phosphate + L-ornithine = L-citrulline + phosphate + H(+). It participates in amino-acid biosynthesis; L-arginine biosynthesis; L-arginine from L-ornithine and carbamoyl phosphate: step 1/3. Its function is as follows. Reversibly catalyzes the transfer of the carbamoyl group from carbamoyl phosphate (CP) to the N(epsilon) atom of ornithine (ORN) to produce L-citrulline. The protein is Ornithine carbamoyltransferase of Cenarchaeum symbiosum (strain A).